Here is a 304-residue protein sequence, read N- to C-terminus: Foldase protein PrsA (304 aa).

The N-terminal stretch at 1–19 is a signal peptide; it reads MKKKLLSVAAVASVFTLAA. C20 is lipidated: N-palmitoyl cysteine. The S-diacylglycerol cysteine moiety is linked to residue C20. The region spanning 140–231 is the PpiC domain; sequence KVEVKASHIL…FGYHIIKVTD (92 aa). The interval 285–304 is disordered; that stretch reads FDLDKQEQQQMQQQMQQQQQ. Residues 292-304 show a composition bias toward low complexity; sequence QQQMQQQMQQQQQ.

The protein belongs to the PrsA family.

It is found in the cell membrane. The catalysed reaction is [protein]-peptidylproline (omega=180) = [protein]-peptidylproline (omega=0). Its function is as follows. Plays a major role in protein secretion by helping the post-translocational extracellular folding of several secreted proteins. In Exiguobacterium sibiricum (strain DSM 17290 / CCUG 55495 / CIP 109462 / JCM 13490 / 255-15), this protein is Foldase protein PrsA.